We begin with the raw amino-acid sequence, 518 residues long: ATP synthase F(1) complex catalytic subunit beta, mitochondrial (518 aa).

ADP contacts are provided by Gly-199, Val-200, Gly-201, Lys-202, Thr-203, and Val-204. Residue Gly-199 participates in ATP binding. The phosphate site is built by Gly-199, Val-200, Gly-201, Lys-202, and Thr-203. The ATP site is built by Gly-201, Lys-202, Thr-203, and Val-204. Residue Thr-203 participates in Mg(2+) binding. Glu-228 is a Mg(2+) binding site. Position 229 (Arg-229) interacts with ATP.

The protein belongs to the ATPase alpha/beta chains family. As to quaternary structure, homotrimer. Component of the ATP synthase complex composed at least of ATP5F1A/subunit alpha, ATP5F1B/subunit beta, ATP5MC1/subunit c (homooctomer), MT-ATP6/subunit a, MT-ATP8/subunit 8, ATP5ME/subunit e, ATP5MF/subunit f, ATP5MG/subunit g, ATP5MK/subunit k, ATP5MJ/subunit j, ATP5F1C/subunit gamma, ATP5F1D/subunit delta, ATP5F1E/subunit epsilon, ATP5PF/subunit F6, ATP5PB/subunit b, ATP5PD/subunit d, ATP5PO/subunit OSCP. ATP synthase complex consists of a soluble F(1) head domain (subunits alpha(3) and beta(3)) - the catalytic core - and a membrane F(0) domain - the membrane proton channel (subunits c, a, 8, e, f, g, k and j). These two domains are linked by a central stalk (subunits gamma, delta, and epsilon) rotating inside the F1 region and a stationary peripheral stalk (subunits F6, b, d, and OSCP).

It localises to the mitochondrion inner membrane. It catalyses the reaction ATP + H2O + 4 H(+)(in) = ADP + phosphate + 5 H(+)(out). Functionally, catalytic subunit beta, of the mitochondrial membrane ATP synthase complex (F(1)F(0) ATP synthase or Complex V) that produces ATP from ADP in the presence of a proton gradient across the membrane which is generated by electron transport complexes of the respiratory chain. ATP synthase complex consist of a soluble F(1) head domain - the catalytic core - and a membrane F(1) domain - the membrane proton channel. These two domains are linked by a central stalk rotating inside the F(1) region and a stationary peripheral stalk. During catalysis, ATP synthesis in the catalytic domain of F(1) is coupled via a rotary mechanism of the central stalk subunits to proton translocation. In vivo, can only synthesize ATP although its ATP hydrolase activity can be activated artificially in vitro. With the subunit alpha (ATP5F1A), forms the catalytic core in the F(1) domain. This chain is ATP synthase F(1) complex catalytic subunit beta, mitochondrial, found in Cyprinus carpio (Common carp).